The sequence spans 301 residues: Immediate early response gene 5-like protein (301 aa).

This sequence belongs to the IER family.

This Danio rerio (Zebrafish) protein is Immediate early response gene 5-like protein (ier5l).